We begin with the raw amino-acid sequence, 880 residues long: Valine--tRNA ligase (880 aa).

Positions 49–59 (PNVTGKLHLGH) match the 'HIGH' region motif. The 'KMSKS' region signature appears at 525 to 529 (KMSKS). Lysine 528 lines the ATP pocket. Residues 809-880 (LEGLINIEEE…VKARLAELKR (72 aa)) are a coiled coil.

This sequence belongs to the class-I aminoacyl-tRNA synthetase family. ValS type 1 subfamily. Monomer.

It localises to the cytoplasm. The catalysed reaction is tRNA(Val) + L-valine + ATP = L-valyl-tRNA(Val) + AMP + diphosphate. Functionally, catalyzes the attachment of valine to tRNA(Val). As ValRS can inadvertently accommodate and process structurally similar amino acids such as threonine, to avoid such errors, it has a 'posttransfer' editing activity that hydrolyzes mischarged Thr-tRNA(Val) in a tRNA-dependent manner. The polypeptide is Valine--tRNA ligase (valS) (Geobacillus stearothermophilus (Bacillus stearothermophilus)).